A 335-amino-acid polypeptide reads, in one-letter code: Nucleoid-associated protein YejK (335 aa).

The protein belongs to the YejK family.

The protein resides in the cytoplasm. The protein localises to the nucleoid. The polypeptide is Nucleoid-associated protein YejK (Salmonella schwarzengrund (strain CVM19633)).